Reading from the N-terminus, the 216-residue chain is Superoxide dismutase [Mn], mitochondrial (216 aa).

Residues 1–18 (MSFLNRNLSRTIKAAVRG) constitute a mitochondrion transit peptide. 4 residues coordinate Mn(2+): His44, His92, Asp176, and His180.

It belongs to the iron/manganese superoxide dismutase family. It depends on Mn(2+) as a cofactor.

The protein localises to the mitochondrion matrix. The enzyme catalyses 2 superoxide + 2 H(+) = H2O2 + O2. In terms of biological role, destroys superoxide anion radicals which are normally produced within the cells and which are toxic to biological systems. The polypeptide is Superoxide dismutase [Mn], mitochondrial (Sod2) (Glossina morsitans morsitans (Savannah tsetse fly)).